The primary structure comprises 142 residues: FAD synthase (142 aa).

Residues 9–10 (VF), 14–17 (HLGH), Asp-93, and Tyr-120 each bind ATP.

It belongs to the archaeal FAD synthase family. In terms of assembly, homodimer. Requires a divalent metal cation as cofactor.

The catalysed reaction is FMN + ATP + H(+) = FAD + diphosphate. It functions in the pathway cofactor biosynthesis; FAD biosynthesis; FAD from FMN: step 1/1. Functionally, catalyzes the transfer of the AMP portion of ATP to flavin mononucleotide (FMN) to produce flavin adenine dinucleotide (FAD) coenzyme. The protein is FAD synthase (ribL) of Thermoplasma volcanium (strain ATCC 51530 / DSM 4299 / JCM 9571 / NBRC 15438 / GSS1).